We begin with the raw amino-acid sequence, 283 residues long: Phospholipid phosphatase 1 (283 aa).

At 1–6 (MFDKTR) the chain is on the cytoplasmic side. A PDZ-binding; involved in localization to the apical cell membrane motif is present at residues 5 to 7 (TRL). Residues 7–27 (LPYVALDVICVLLAGLPFAIL) traverse the membrane as a helical segment. The Extracellular segment spans residues 28-53 (TSRHTPFQRGIFCNDDSIKYPYKEDT). A helical membrane pass occupies residues 54-74 (IPYALLGGIVIPFCIIVMSIG). At 75 to 88 (ESLSVYFNVLHSNS) the chain is on the cytoplasmic side. Residues 89–109 (FVGNPYIATIYKAVGAFLFGV) traverse the membrane as a helical segment. At 110–164 (SASQSLTDIAKYTIGSLRPHFLAICNPDWSKINCSDGYIEDYICQGNEEKVKEGR) the chain is on the extracellular side. A phosphatase sequence motif I region spans residues 120-128 (KYTIGSLRP). Asparagine 142 is a glycosylation site (N-linked (GlcNAc...) asparagine). The helical transmembrane segment at 165–185 (LSFYSGHSSFSMYCMLFVALY) threads the bilayer. The interval 168-171 (YSGH) is phosphatase sequence motif II. Histidine 171 (proton donors) is an active-site residue. The Cytoplasmic portion of the chain corresponds to 186-199 (LQARMKGDWARLLR). The chain crosses the membrane as a helical span at residues 200–220 (PMLQFGLIAFSIYVGLSRVSD). Residues 216 to 227 (SRVSDYKHHWSD) form a phosphatase sequence motif III region. Over 221-229 (YKHHWSDVT) the chain is Extracellular. Histidine 223 serves as the catalytic Nucleophile. The chain crosses the membrane as a helical span at residues 230 to 250 (VGLIQGAAMAILVALYVSDFF). The Cytoplasmic segment spans residues 251 to 283 (KDTHSYKERKEEDPHTTLHETASSRNYSTNHEP). A disordered region spans residues 260–283 (KEEDPHTTLHETASSRNYSTNHEP). Polar residues predominate over residues 269 to 283 (HETASSRNYSTNHEP).

Belongs to the PA-phosphatase related phosphoesterase family. In terms of assembly, forms functional homodimers and homooligomers that are not required for substrate recognition and catalytic activity. Can also form heterooligomers with PLPP2 and PLPP3. N-glycosylated. N-linked sugars are of the complex type. N-glycosylation is not required for the phosphatase activity. Widely expressed. Highly expressed in kidney and lung. Almost undetectable in brain, heart, bone, muscle or spleen.

It is found in the cell membrane. Its subcellular location is the apical cell membrane. The protein resides in the membrane raft. It localises to the membrane. The protein localises to the caveola. It carries out the reaction a 1,2-diacyl-sn-glycero-3-phosphate + H2O = a 1,2-diacyl-sn-glycerol + phosphate. The catalysed reaction is 1,2-dihexadecanoyl-sn-glycero-3-phosphate + H2O = 1,2-dihexadecanoyl-sn-glycerol + phosphate. The enzyme catalyses 1,2-di-(9Z-octadecenoyl)-sn-glycero-3-phosphate + H2O = 1,2-di-(9Z-octadecenoyl)-sn-glycerol + phosphate. It catalyses the reaction a monoacyl-sn-glycero-3-phosphate + H2O = a monoacylglycerol + phosphate. It carries out the reaction (9Z)-octadecenoyl-sn-glycero-3-phosphate + H2O = (9Z-octadecenoyl)-glycerol + phosphate. The catalysed reaction is a 1-acyl-sn-glycero-3-phosphate + H2O = a 1-acyl-sn-glycerol + phosphate. The enzyme catalyses 1-(9Z-octadecenoyl)-sn-glycero-3-phosphate + H2O = 1-(9Z-octadecenoyl)-sn-glycerol + phosphate. It catalyses the reaction a 1,2-diacyl-sn-glycerol 3-diphosphate + H2O = a 1,2-diacyl-sn-glycero-3-phosphate + phosphate + H(+). It carries out the reaction sphing-4-enine 1-phosphate + H2O = sphing-4-enine + phosphate. The catalysed reaction is an N-acylsphing-4-enine 1-phosphate + H2O = an N-acylsphing-4-enine + phosphate. The enzyme catalyses N-(octanoyl)-sphing-4-enine-1-phosphate + H2O = N-octanoylsphing-4-enine + phosphate. It catalyses the reaction N-(9Z-octadecenoyl)-ethanolamine phosphate + H2O = N-(9Z-octadecenoyl) ethanolamine + phosphate. It carries out the reaction 1-hexadecanoyl-2-(9Z-octadecenoyl)-sn-glycero-3-phosphate + H2O = 1-hexadecanoyl-2-(9Z-octadecenoyl)-sn-glycerol + phosphate. The protein operates within lipid metabolism; phospholipid metabolism. With respect to regulation, magnesium-independent phospholipid phosphatase. Insensitive to N-ethylmaleimide. Functionally, magnesium-independent phospholipid phosphatase of the plasma membrane that catalyzes the dephosphorylation of a variety of glycerolipid and sphingolipid phosphate esters including phosphatidate/PA, lysophosphatidate/LPA, diacylglycerol pyrophosphate/DGPP, sphingosine 1-phosphate/S1P and ceramide 1-phosphate/C1P. Also acts on N-oleoyl ethanolamine phosphate/N-(9Z-octadecenoyl)-ethanolamine phosphate, a potential physiological compound. Through its extracellular phosphatase activity allows both the hydrolysis and the cellular uptake of these bioactive lipid mediators from the milieu, regulating signal transduction in different cellular processes. It is for instance essential for the extracellular hydrolysis of S1P and subsequent conversion into intracellular S1P. Involved in the regulation of inflammation, platelets activation, cell proliferation and migration among other processes. May also have an intracellular activity to regulate phospholipid-mediated signaling pathways. The polypeptide is Phospholipid phosphatase 1 (Mus musculus (Mouse)).